The following is a 236-amino-acid chain: Phosphoribosylaminoimidazole-succinocarboxamide synthase (236 aa).

It belongs to the SAICAR synthetase family.

It carries out the reaction 5-amino-1-(5-phospho-D-ribosyl)imidazole-4-carboxylate + L-aspartate + ATP = (2S)-2-[5-amino-1-(5-phospho-beta-D-ribosyl)imidazole-4-carboxamido]succinate + ADP + phosphate + 2 H(+). The protein operates within purine metabolism; IMP biosynthesis via de novo pathway; 5-amino-1-(5-phospho-D-ribosyl)imidazole-4-carboxamide from 5-amino-1-(5-phospho-D-ribosyl)imidazole-4-carboxylate: step 1/2. In Pseudomonas entomophila (strain L48), this protein is Phosphoribosylaminoimidazole-succinocarboxamide synthase.